Reading from the N-terminus, the 228-residue chain is L-ribulose-5-phosphate 4-epimerase UlaF (228 aa).

Substrate contacts are provided by residues 26-27, 43-44, and 72-73; these read GN, SG, and SS. Positions 74, 93, and 95 each coordinate Zn(2+). Catalysis depends on Asp-118, which acts as the Proton donor/acceptor. His-167 serves as a coordination point for Zn(2+). Catalysis depends on Tyr-225, which acts as the Proton donor/acceptor.

Belongs to the aldolase class II family. AraD/FucA subfamily. The cofactor is Zn(2+).

It catalyses the reaction L-ribulose 5-phosphate = D-xylulose 5-phosphate. It participates in cofactor degradation; L-ascorbate degradation; D-xylulose 5-phosphate from L-ascorbate: step 4/4. Its function is as follows. Catalyzes the isomerization of L-ribulose 5-phosphate to D-xylulose 5-phosphate. Is involved in the anaerobic L-ascorbate utilization. The polypeptide is L-ribulose-5-phosphate 4-epimerase UlaF (Shigella boydii serotype 18 (strain CDC 3083-94 / BS512)).